Reading from the N-terminus, the 265-residue chain is Cytochrome c oxidase subunit 3 (265 aa).

Helical transmembrane passes span 16-36 (PWPF…ILWL), 40-60 (PSFL…FSWW), 83-103 (CVAL…WTFF), 159-179 (VGPF…FLVQ), 198-218 (VFYL…IWLM), and 241-261 (IWYW…VYVW).

The protein belongs to the cytochrome c oxidase subunit 3 family. As to quaternary structure, component of the cytochrome c oxidase (complex IV, CIV), a multisubunit enzyme composed of a catalytic core of 3 subunits and several supernumerary subunits. The complex exists as a monomer or a dimer and forms supercomplexes (SCs) in the inner mitochondrial membrane with ubiquinol-cytochrome c oxidoreductase (cytochrome b-c1 complex, complex III, CIII).

Its subcellular location is the mitochondrion inner membrane. The catalysed reaction is 4 Fe(II)-[cytochrome c] + O2 + 8 H(+)(in) = 4 Fe(III)-[cytochrome c] + 2 H2O + 4 H(+)(out). Its function is as follows. Component of the cytochrome c oxidase, the last enzyme in the mitochondrial electron transport chain which drives oxidative phosphorylation. The respiratory chain contains 3 multisubunit complexes succinate dehydrogenase (complex II, CII), ubiquinol-cytochrome c oxidoreductase (cytochrome b-c1 complex, complex III, CIII) and cytochrome c oxidase (complex IV, CIV), that cooperate to transfer electrons derived from NADH and succinate to molecular oxygen, creating an electrochemical gradient over the inner membrane that drives transmembrane transport and the ATP synthase. Cytochrome c oxidase is the component of the respiratory chain that catalyzes the reduction of oxygen to water. Electrons originating from reduced cytochrome c in the intermembrane space (IMS) are transferred via the dinuclear copper A center (CU(A)) of subunit 2 and heme A of subunit 1 to the active site in subunit 1, a binuclear center (BNC) formed by heme A3 and copper B (CU(B)). The BNC reduces molecular oxygen to 2 water molecules using 4 electrons from cytochrome c in the IMS and 4 protons from the mitochondrial matrix. The protein is Cytochrome c oxidase subunit 3 (COIII) of Mytilus edulis (Blue mussel).